A 574-amino-acid polypeptide reads, in one-letter code: Serine/threonine-protein kinase fray1 (574 aa).

Residues 24–41 (NHHDLPDSDSDSSSREEE) show a composition bias toward basic and acidic residues. Positions 24-64 (NHHDLPDSDSDSSSREEELMNSSGGGNGKEPIGEKKKLPSH) are disordered. Positions 97 to 357 (YNLIEPIGEG…ASKLLEHKVF (261 aa)) constitute a Protein kinase domain. ATP-binding positions include 103-111 (IGEGTEGRV) and Lys-126. Catalysis depends on Asp-221, which acts as the Proton acceptor. A Phosphothreonine; by autocatalysis modification is found at Thr-256. Disordered stretches follow at residues 381 to 447 (YRES…LVNM), 462 to 514 (LSSG…PEKE), and 532 to 554 (FGSP…HEHH). Composition is skewed to low complexity over residues 386 to 403 (SPAS…PSSP), 418 to 441 (KNIK…NLSN), and 462 to 475 (LSSG…SSDL). A compositionally biased stretch (basic residues) spans 478–491 (GHLHKIGTPKKKHS). Low complexity predominate over residues 492-506 (PSGSIGDSHGSISPP). The segment covering 536-553 (KEGDHNHQHHKSEGDHEH) has biased composition (basic and acidic residues).

Belongs to the protein kinase superfamily. STE Ser/Thr protein kinase family. STE20 subfamily. Requires Mn(2+) as cofactor. In terms of processing, undergoes autophosphorylation in the catalytic domain.

The enzyme catalyses L-seryl-[protein] + ATP = O-phospho-L-seryl-[protein] + ADP + H(+). It carries out the reaction L-threonyl-[protein] + ATP = O-phospho-L-threonyl-[protein] + ADP + H(+). The polypeptide is Serine/threonine-protein kinase fray1 (Dictyostelium discoideum (Social amoeba)).